A 187-amino-acid polypeptide reads, in one-letter code: MMDGVEGGTAMYGGLETVQYVRTHHQHLCRENQCTSALVKHIKAPLHLVWSLVRRFDQPQKYKPFVSRCTVIGDPEIGSLREVNVKSGLPATTSTERLELLDDEEHILGIKIIGGDHRLKNYSSILTVHPEIIEGRAGTMVIESFVVDVPQGNTKDETCYFVEALIRCNLKSLADVSERLASQDITQ.

An START-like region spans residues 27–178 (HLCRENQCTS…NLKSLADVSE (152 aa)). Disulfide bonds link cysteine 29–cysteine 159 and cysteine 34–cysteine 159. Residues lysine 63, 91 to 96 (ATTSTE), 118 to 124 (RLKNYSS), and glutamate 143 each bind abscisate. The short motif at 87–91 (SGLPA) is the Gate loop element. Positions 117-119 (HRL) match the Latch loop motif.

Belongs to the PYR/PYL/RCAR abscisic acid intracellular receptor family. Homodimer. Monomer. Binds ABA on one subunit only. Binds to CARs protein in an ABA-independent manner, both at the plasma membrane and in the nucleus. Binds specifically (+)-ABA but not (-)-ABA. Interacts with HAB1, ABI1 and ABI2, and possibly with other PP2Cs. Interacts with TOPP1. Interacts with DDA1. Expressed in root tips, vascular tissues, stomata, flowers, pollen tubes and developing seeds.

It localises to the cytoplasm. Its subcellular location is the nucleus. The protein resides in the cell membrane. Functionally, receptor for abscisic acid (ABA) required for ABA-mediated responses such as stomatal closure and germination inhibition. Inhibits the activity of group-A protein phosphatases type 2C (PP2Cs) in an ABA-independent manner but more efficiently when activated by ABA. Confers enhanced sensitivity to ABA. Can be activated only by (+)-ABA but not by (-)-ABA. The protein is Abscisic acid receptor PYL9 (PYL9) of Arabidopsis thaliana (Mouse-ear cress).